A 484-amino-acid chain; its full sequence is MENDTWENESSASNHSIDETIVEIPGKYQTMEMIFIATVTGSLSLVTVVGNILVMLSIKVNRQLQTVNNYFLFSLACADLIIGVFSMNLYSLYIIKGYWPLGPIVCDLWLALDYVVSNASVMNLLIISLERXFCVTKPLTYPARRTTKMAGLMIAAAWLLSFELWAPAILFWQFIVGQRTVPSGECYIQFLSNPAVTFGTAIAAFYLPVVIMTILYIHISLASRSRVRRHCPETRQEKKKPISSMKSLLIKQTKNIPKQDAGDKVVEKKNGVSNGKIEKSMTNLQTAEEKETSNESSSASLSHNPPEKQPLSEASSGVVLAPTQSMPPLPAKANTASKWSKIKIVTKQTGNECVTAIEIVPECAIPLPEQANNRPVNVARKFASIARNQVRKKRQMAAREKKVTRTIFAILLAFIITWTPYNVMVLINTFCQTCIPETIWYIGYWLCYVNSTINPACYALCNATFKKTFKHLLMCQYKSIGTAR.

Over 1–32 (MENDTWENESSASNHSIDETIVEIPGKYQTME) the chain is Extracellular. Asn3, Asn8, and Asn14 each carry an N-linked (GlcNAc...) asparagine glycan. A helical transmembrane segment spans residues 33–55 (MIFIATVTGSLSLVTVVGNILVM). The Cytoplasmic portion of the chain corresponds to 56-69 (LSIKVNRQLQTVNN). Residues 70 to 90 (YFLFSLACADLIIGVFSMNLY) traverse the membrane as a helical segment. Topologically, residues 91–107 (SLYIIKGYWPLGPIVCD) are extracellular. The cysteines at positions 106 and 186 are disulfide-linked. Residues 108 to 129 (LWLALDYVVSNASVMNLLIISL) traverse the membrane as a helical segment. Over 130-149 (ERXFCVTKPLTYPARRTTKM) the chain is Cytoplasmic. The helical transmembrane segment at 150–172 (AGLMIAAAWLLSFELWAPAILFW) threads the bilayer. Residues 173-194 (QFIVGQRTVPSGECYIQFLSNP) are Extracellular-facing. Residues 195–217 (AVTFGTAIAAFYLPVVIMTILYI) form a helical membrane-spanning segment. Over 218 to 406 (HISLASRSRV…AAREKKVTRT (189 aa)) the chain is Cytoplasmic. The segment at 255–316 (NIPKQDAGDK…EKQPLSEASS (62 aa)) is disordered. Positions 260 to 270 (DAGDKVVEKKN) are enriched in basic and acidic residues. A helical membrane pass occupies residues 407 to 427 (IFAILLAFIITWTPYNVMVLI). Residues 428-441 (NTFCQTCIPETIWY) are Extracellular-facing. Residues 442–461 (IGYWLCYVNSTINPACYALC) form a helical membrane-spanning segment. The Cytoplasmic portion of the chain corresponds to 462 to 484 (NATFKKTFKHLLMCQYKSIGTAR).

It belongs to the G-protein coupled receptor 1 family. Muscarinic acetylcholine receptor subfamily. CHRM4 sub-subfamily.

The protein localises to the cell membrane. The protein resides in the postsynaptic cell membrane. Functionally, the muscarinic acetylcholine receptor mediates various cellular responses, including inhibition of adenylate cyclase, breakdown of phosphoinositides and modulation of potassium channels through the action of G proteins. Primary transducing effect is inhibition of adenylate cyclase. This Xenopus laevis (African clawed frog) protein is Muscarinic acetylcholine receptor M4 (chrm4).